The primary structure comprises 540 residues: Coiled-coil domain-containing protein 116 (540 aa).

The stretch at 79-102 forms a coiled coil; sequence QVLDSLQTVVEQATECVATMKTEA. A disordered region spans residues 347-400; the sequence is PGNSDLQPSSKASLPTDREARGETCYSPTSASSPKTSHRKSKDRRGSPSNAVQM. Composition is skewed to polar residues over residues 350 to 359 and 372 to 381; these read SDLQPSSKAS and YSPTSASSPK. Residue S393 is modified to Phosphoserine.

It localises to the cytoplasm. The protein resides in the cytoskeleton. The protein localises to the microtubule organizing center. Its subcellular location is the centrosome. The protein is Coiled-coil domain-containing protein 116 (Ccdc116) of Rattus norvegicus (Rat).